We begin with the raw amino-acid sequence, 298 residues long: Tyrosine recombinase XerC (298 aa).

A Core-binding (CB) domain is found at 2-88; the sequence is TDLHTDVERY…ALRSFFDWLV (87 aa). Positions 109-288 constitute a Tyr recombinase domain; the sequence is HLPKNIDVDD…DFQHLASVYD (180 aa). Residues Arg148, Lys172, His240, Arg243, and His266 contribute to the active site. Tyr275 (O-(3'-phospho-DNA)-tyrosine intermediate) is an active-site residue.

The protein belongs to the 'phage' integrase family. XerC subfamily. In terms of assembly, forms a cyclic heterotetrameric complex composed of two molecules of XerC and two molecules of XerD, in which XerC interacts with XerD via its C-terminal region, XerD interacts with XerC via its C-terminal region and so on.

It is found in the cytoplasm. Its activity is regulated as follows. FtsK may regulate the catalytic switch between XerC and XerD in the heterotetrameric complex during the two steps of the recombination process. Functionally, site-specific tyrosine recombinase, which acts by catalyzing the cutting and rejoining of the recombining DNA molecules. Binds cooperatively to specific DNA consensus sequences that are separated from XerD binding sites by a short central region, forming the heterotetrameric XerC-XerD complex that recombines DNA substrates. The complex is essential to convert dimers of the bacterial chromosome into monomers to permit their segregation at cell division. It also contributes to the segregational stability of plasmids. In the complex XerC specifically exchanges the top DNA strands. This Escherichia coli O45:K1 (strain S88 / ExPEC) protein is Tyrosine recombinase XerC.